The sequence spans 481 residues: Glutamyl-tRNA(Gln) amidotransferase subunit A (481 aa).

Residues lysine 74 and serine 149 each act as charge relay system in the active site. Serine 173 serves as the catalytic Acyl-ester intermediate.

This sequence belongs to the amidase family. GatA subfamily. Heterotrimer of A, B and C subunits.

The catalysed reaction is L-glutamyl-tRNA(Gln) + L-glutamine + ATP + H2O = L-glutaminyl-tRNA(Gln) + L-glutamate + ADP + phosphate + H(+). In terms of biological role, allows the formation of correctly charged Gln-tRNA(Gln) through the transamidation of misacylated Glu-tRNA(Gln) in organisms which lack glutaminyl-tRNA synthetase. The reaction takes place in the presence of glutamine and ATP through an activated gamma-phospho-Glu-tRNA(Gln). The polypeptide is Glutamyl-tRNA(Gln) amidotransferase subunit A (Francisella tularensis subsp. tularensis (strain FSC 198)).